The following is a 270-amino-acid chain: MVTAMNVSHEVNQLFQPYNFELSKDMRPFFEEYWATSFPIALIYLVLIAVGQNYMKERKGFNLQGPLILWSFCLAIFSILGAVRMWGIMGTVLLTGGLKQTVCFINFIDNSTVKFWSWVFLLSKVIELGDTAFIILRKRPLIFIHWYHHSTVLVYTSFGYKNKVPAGGWFVTMNFGVHAIMYTYYTLKAANVKPPKMLPMLITSLQILQMFVGAIVSILTYIWRQDQGCHTTMEHLFWSFILYMTYFILFAHFFCQTYIRPKVKAKTKSQ.

Asn6 carries an N-linked (GlcNAc...) asparagine glycan. 2 helical membrane-spanning segments follow: residues 29–49 (FFEEYWATSFPIALIYLVLIA) and 63–83 (LQGPLILWSFCLAIFSILGAV). The N-linked (GlcNAc...) asparagine glycan is linked to Asn110. 5 helical membrane-spanning segments follow: residues 115-135 (FWSWVFLLSKVIELGDTAFII), 140-160 (PLIFIHWYHHSTVLVYTSFGY), 164-184 (VPAGGWFVTMNFGVHAIMYTY), 198-218 (LPMLITSLQILQMFVGAIVSI), and 235-255 (HLFWSFILYMTYFILFAHFFC). Positions 266–270 (KTKSQ) match the Di-lysine motif motif.

It belongs to the ELO family. ELOVL3 subfamily. As to quaternary structure, interacts with TECR. Post-translationally, N-Glycosylated. As to expression, testis.

Its subcellular location is the endoplasmic reticulum membrane. The enzyme catalyses a very-long-chain acyl-CoA + malonyl-CoA + H(+) = a very-long-chain 3-oxoacyl-CoA + CO2 + CoA. It catalyses the reaction eicosanoyl-CoA + malonyl-CoA + H(+) = 3-oxodocosanoyl-CoA + CO2 + CoA. It carries out the reaction hexadecanoyl-CoA + malonyl-CoA + H(+) = 3-oxooctadecanoyl-CoA + CO2 + CoA. The catalysed reaction is octadecanoyl-CoA + malonyl-CoA + H(+) = 3-oxoeicosanoyl-CoA + CO2 + CoA. The enzyme catalyses (9Z)-octadecenoyl-CoA + malonyl-CoA + H(+) = 3-oxo-(11Z)-eicosenoyl-CoA + CO2 + CoA. It catalyses the reaction (9Z,12Z)-octadecadienoyl-CoA + malonyl-CoA + H(+) = (11Z,14Z)-3-oxoicosa-11,14-dienoyl-CoA + CO2 + CoA. It carries out the reaction (9Z,12Z,15Z)-octadecatrienoyl-CoA + malonyl-CoA + H(+) = (11Z,14Z,17Z)-3-oxoeicosatrienoyl-CoA + CO2 + CoA. The catalysed reaction is docosanoyl-CoA + malonyl-CoA + H(+) = 3-oxotetracosanoyl-CoA + CO2 + CoA. The enzyme catalyses tetradecanoyl-CoA + malonyl-CoA + H(+) = 3-oxohexadecanoyl-CoA + CO2 + CoA. The protein operates within lipid metabolism; polyunsaturated fatty acid biosynthesis. Its function is as follows. Catalyzes the first and rate-limiting reaction of the four reactions that constitute the long-chain fatty acids elongation cycle. This endoplasmic reticulum-bound enzymatic process allows the addition of 2 carbons to the chain of long- and very long-chain fatty acids (VLCFAs) per cycle. Condensing enzyme that exhibits activity toward saturated and unsaturated acyl-CoA substrates with higher activity toward C18 acyl-CoAs, especially C18:0 acyl-CoAs. May participate in the production of saturated and monounsaturated VLCFAs of different chain lengths that are involved in multiple biological processes as precursors of membrane lipids and lipid mediators. The protein is Very long chain fatty acid elongase 3 of Homo sapiens (Human).